Reading from the N-terminus, the 417-residue chain is Probable phosphoglycerate kinase (417 aa).

Residues V23, D24, F25, N26, Q38, R39, S62, H63, G65, R66, L121, R122, H169, and R170 each coordinate (2R)-3-phosphoglycerate. G213 provides a ligand contact to ADP. Residue G213 coordinates CDP. AMP contacts are provided by A214 and K215. A214 provides a ligand contact to ATP. Residue A214 coordinates Mg(2+). Positions 217 and 218 each coordinate Mg(2+). Residue D218 participates in CDP binding. K219 contacts AMP. Residue K219 participates in ATP binding. Residue G237 coordinates ADP. G237 contacts CDP. Positions 238 and 312 each coordinate AMP. Residues G238 and G312 each coordinate ATP. 3 residues coordinate CDP: G337, A339, and F342. An ADP-binding site is contributed by F342. Residue E343 coordinates AMP. E343, D374, and T375 together coordinate ATP. A Mg(2+)-binding site is contributed by D374.

This sequence belongs to the phosphoglycerate kinase family. In terms of assembly, monomer. Requires Mg(2+) as cofactor.

It is found in the cytoplasm. The enzyme catalyses (2R)-3-phosphoglycerate + ATP = (2R)-3-phospho-glyceroyl phosphate + ADP. Its pathway is carbohydrate degradation; glycolysis; pyruvate from D-glyceraldehyde 3-phosphate: step 2/5. The sequence is that of Probable phosphoglycerate kinase (pgk-1) from Caenorhabditis elegans.